The primary structure comprises 263 residues: Flagellar L-ring protein (263 aa).

The N-terminal stretch at 1-15 (MKRLLCLLLLTTLTG) is a signal peptide. C16 carries N-palmitoyl cysteine lipidation. C16 carries the S-diacylglycerol cysteine lipid modification. Residues 123–143 (KSADAELSKSNDSSMDPLQVG) are disordered.

This sequence belongs to the FlgH family. As to quaternary structure, the basal body constitutes a major portion of the flagellar organelle and consists of four rings (L,P,S, and M) mounted on a central rod.

It localises to the cell outer membrane. The protein resides in the bacterial flagellum basal body. Its function is as follows. Assembles around the rod to form the L-ring and probably protects the motor/basal body from shearing forces during rotation. The sequence is that of Flagellar L-ring protein from Aliivibrio fischeri (strain ATCC 700601 / ES114) (Vibrio fischeri).